The sequence spans 203 residues: Large ribosomal subunit protein uL22 (203 aa).

Polar residues-rich tracts occupy residues 116–126 (QNGGESQNQEY) and 134–167 (VSKS…DSQL). A disordered region spans residues 116–203 (QNGGESQNQE…TVLAQEKEVK (88 aa)). Residues 168 to 194 (SAKTNSTTTAKKTDLADNNTKNDATNT) are compositionally biased toward low complexity.

Belongs to the universal ribosomal protein uL22 family. Part of the 50S ribosomal subunit.

This protein binds specifically to 23S rRNA; its binding is stimulated by other ribosomal proteins, e.g. L4, L17, and L20. It is important during the early stages of 50S assembly. It makes multiple contacts with different domains of the 23S rRNA in the assembled 50S subunit and ribosome. Its function is as follows. The globular domain of the protein is located near the polypeptide exit tunnel on the outside of the subunit, while an extended beta-hairpin is found that lines the wall of the exit tunnel in the center of the 70S ribosome. The chain is Large ribosomal subunit protein uL22 from Mesomycoplasma hyopneumoniae (strain 232) (Mycoplasma hyopneumoniae).